An 848-amino-acid polypeptide reads, in one-letter code: DNA mismatch repair protein MutS (848 aa).

Gly610–Ser617 is an ATP binding site.

It belongs to the DNA mismatch repair MutS family.

In terms of biological role, this protein is involved in the repair of mismatches in DNA. It is possible that it carries out the mismatch recognition step. This protein has a weak ATPase activity. The protein is DNA mismatch repair protein MutS of Francisella philomiragia subsp. philomiragia (strain ATCC 25017 / CCUG 19701 / FSC 153 / O#319-036).